The chain runs to 208 residues: Uracil phosphoribosyltransferase (208 aa).

5-phospho-alpha-D-ribose 1-diphosphate contacts are provided by residues arginine 78, arginine 103, and 130–138 (DPMLATGGS). Uracil contacts are provided by residues isoleucine 193 and 198–200 (GDA). Aspartate 199 is a binding site for 5-phospho-alpha-D-ribose 1-diphosphate.

It belongs to the UPRTase family. The cofactor is Mg(2+).

The catalysed reaction is UMP + diphosphate = 5-phospho-alpha-D-ribose 1-diphosphate + uracil. The protein operates within pyrimidine metabolism; UMP biosynthesis via salvage pathway; UMP from uracil: step 1/1. With respect to regulation, allosterically activated by GTP. Its function is as follows. Catalyzes the conversion of uracil and 5-phospho-alpha-D-ribose 1-diphosphate (PRPP) to UMP and diphosphate. The chain is Uracil phosphoribosyltransferase from Yersinia pestis.